The chain runs to 494 residues: BUB3-interacting and GLEBS motif-containing protein ZNF207 (494 aa).

The segment at 1–92 (MGRKKKKQLK…EGIPEKDMDE (92 aa)) is microtubule-binding region. C2H2-type zinc fingers lie at residues 11–34 (PWCW…KAKH) and 35–58 (FKCH…MQVH). Basic and acidic residues predominate over residues 100–111 (KTQESQKKKQQD). 3 disordered regions span residues 100–161 (KTQE…PGIP), 250–377 (NRPP…SATS), and 455–494 (LPGA…GGRY). The segment covering 112 to 121 (DSDEYDDDDS) has biased composition (acidic residues). Polar residues predominate over residues 127-136 (FQPQPVQPQQ). Residues 142 to 161 (MAQPGLPPVPGAPGMPPGIP) show a composition bias toward pro residues. Over residues 283 to 300 (SSSTASSNSESLSASSKA) the composition is skewed to low complexity. The segment covering 323–332 (LNSTPATSTE) has biased composition (polar residues). Residues 342–377 (TQSTASTTSTTNSTAAKPAASITSKPATLTTTSATS) show a composition bias toward low complexity. The tract at residues 375-407 (ATSKLIHPDEDISLEERRAQLPKYQRNLPRPGQ) is GLEBS. A compositionally biased stretch (pro residues) spans 463 to 483 (GQGPPMVPPYQGGPPRPPMGM).

In terms of assembly, interacts (via GLEBS region) with BUB3.

It localises to the nucleus. The protein resides in the chromosome. It is found in the centromere. The protein localises to the kinetochore. Its subcellular location is the cytoplasm. It localises to the cytoskeleton. The protein resides in the spindle. Functionally, kinetochore- and microtubule-binding protein that plays a key role in spindle assembly. ZNF207/BuGZ is mainly composed of disordered low-complexity regions and undergoes phase transition or coacervation to form temperature-dependent liquid droplets. Coacervation promotes microtubule bundling and concentrates tubulin, promoting microtubule polymerization and assembly of spindle and spindle matrix by concentrating its building blocks. Also acts as a regulator of mitotic chromosome alignment by mediating the stability and kinetochore loading of BUB3. Mechanisms by which BUB3 is protected are unclear: according to a first report, ZNF207/BuGZ may act by blocking ubiquitination and proteasomal degradation of BUB3. According to another report, the stabilization is independent of the proteasome. The protein is BUB3-interacting and GLEBS motif-containing protein ZNF207 of Pongo abelii (Sumatran orangutan).